Consider the following 189-residue polypeptide: Peptidyl-tRNA hydrolase (189 aa).

A tRNA-binding site is contributed by tyrosine 14. The Proton acceptor role is filled by histidine 19. Residues phenylalanine 64, asparagine 66, and asparagine 112 each coordinate tRNA.

The protein belongs to the PTH family. As to quaternary structure, monomer.

It localises to the cytoplasm. The enzyme catalyses an N-acyl-L-alpha-aminoacyl-tRNA + H2O = an N-acyl-L-amino acid + a tRNA + H(+). In terms of biological role, hydrolyzes ribosome-free peptidyl-tRNAs (with 1 or more amino acids incorporated), which drop off the ribosome during protein synthesis, or as a result of ribosome stalling. Functionally, catalyzes the release of premature peptidyl moieties from peptidyl-tRNA molecules trapped in stalled 50S ribosomal subunits, and thus maintains levels of free tRNAs and 50S ribosomes. In Rhizorhabdus wittichii (strain DSM 6014 / CCUG 31198 / JCM 15750 / NBRC 105917 / EY 4224 / RW1) (Sphingomonas wittichii), this protein is Peptidyl-tRNA hydrolase.